A 224-amino-acid chain; its full sequence is ATP synthase subunit b (224 aa).

Residues 2–22 (TPSLGLIFWQSVIFLISFIIL) form a helical membrane-spanning segment.

The protein belongs to the ATPase B chain family. In terms of assembly, F-type ATPases have 2 components, F(1) - the catalytic core - and F(0) - the membrane proton channel. F(1) has five subunits: alpha(3), beta(3), gamma(1), delta(1), epsilon(1). F(0) has three main subunits: a(1), b(2) and c(10-14). The alpha and beta chains form an alternating ring which encloses part of the gamma chain. F(1) is attached to F(0) by a central stalk formed by the gamma and epsilon chains, while a peripheral stalk is formed by the delta and b chains.

The protein localises to the cell membrane. F(1)F(0) ATP synthase produces ATP from ADP in the presence of a proton or sodium gradient. F-type ATPases consist of two structural domains, F(1) containing the extramembraneous catalytic core and F(0) containing the membrane proton channel, linked together by a central stalk and a peripheral stalk. During catalysis, ATP synthesis in the catalytic domain of F(1) is coupled via a rotary mechanism of the central stalk subunits to proton translocation. In terms of biological role, component of the F(0) channel, it forms part of the peripheral stalk, linking F(1) to F(0). The protein is ATP synthase subunit b of Karelsulcia muelleri (strain GWSS) (Sulcia muelleri).